The chain runs to 354 residues: Peripherin-2 (354 aa).

The Cytoplasmic segment spans residues 1–24 (MALLKVKFNQKKRVKLAQGLWLMN). The chain crosses the membrane as a helical span at residues 25 to 43 (WFSVFAGIIVFSMGLFLKI). Over 44–61 (ELRKRSEVMDNSESHFVP) the chain is Lumenal. A helical transmembrane segment spans residues 62-80 (NSLILMGILSCAFNGFAGK). Residues 81 to 99 (ICYDSLDPAKFAKWKPLLK) are Cytoplasmic-facing. The chain crosses the membrane as a helical span at residues 100–123 (PYLALCFFFNILLFFVALICFLMR). Over 124–264 (GSLESTLAQG…LHYYSSMMSS (141 aa)) the chain is Lumenal. Residue N229 is glycosylated (N-linked (GlcNAc...) asparagine). A helical transmembrane segment spans residues 265-290 (MGAVVLLVWLFEMSVMVGLRLLHTSL). Residues 291–354 (ESIANPEDPE…GKTPAITTVS (64 aa)) are Cytoplasmic-facing. Residues 335 to 354 (GAEGAEGEEAGKTPAITTVS) form a disordered region.

Belongs to the PRPH2/ROM1 family. As to quaternary structure, homodimer; disulfide-linked.

The protein localises to the membrane. Functionally, may be involved in the morphogenesis of retina outer segment disks and the development and maintenance of the retina ultrastructure. This Gallus gallus (Chicken) protein is Peripherin-2 (PRPH2).